Here is a 201-residue protein sequence, read N- to C-terminus: Holliday junction branch migration complex subunit RuvA (201 aa).

The tract at residues 1–64 is domain I; the sequence is MIGRLYGKII…EDAHLLFGFA (64 aa). Residues 65 to 143 form a domain II region; it reads QKQDRTLFRE…GIAQTDFFVE (79 aa). Positions 144-154 are flexible linker; that stretch reads HSHETMVATYE. The interval 154 to 201 is domain III; sequence EIDASEEARDALLALGYKLTDAEKMIKKVHKSGATSEQLIRDALKASL.

This sequence belongs to the RuvA family. As to quaternary structure, homotetramer. Forms an RuvA(8)-RuvB(12)-Holliday junction (HJ) complex. HJ DNA is sandwiched between 2 RuvA tetramers; dsDNA enters through RuvA and exits via RuvB. An RuvB hexamer assembles on each DNA strand where it exits the tetramer. Each RuvB hexamer is contacted by two RuvA subunits (via domain III) on 2 adjacent RuvB subunits; this complex drives branch migration. In the full resolvosome a probable DNA-RuvA(4)-RuvB(12)-RuvC(2) complex forms which resolves the HJ.

It is found in the cytoplasm. Functionally, the RuvA-RuvB-RuvC complex processes Holliday junction (HJ) DNA during genetic recombination and DNA repair, while the RuvA-RuvB complex plays an important role in the rescue of blocked DNA replication forks via replication fork reversal (RFR). RuvA specifically binds to HJ cruciform DNA, conferring on it an open structure. The RuvB hexamer acts as an ATP-dependent pump, pulling dsDNA into and through the RuvAB complex. HJ branch migration allows RuvC to scan DNA until it finds its consensus sequence, where it cleaves and resolves the cruciform DNA. In Haemophilus ducreyi (strain 35000HP / ATCC 700724), this protein is Holliday junction branch migration complex subunit RuvA.